A 238-amino-acid chain; its full sequence is Ribonuclease 3 (238 aa).

The region spanning 10-139 (FKQFQEQTGI…FIGALYLDQG (130 aa)) is the RNase III domain. Glutamate 52 is a Mg(2+) binding site. The active site involves aspartate 56. Positions 125 and 128 each coordinate Mg(2+). Residue glutamate 128 is part of the active site. A DRBM domain is found at 165-234 (DYKSQLQEFV…AQMALAKLKQ (70 aa)).

Belongs to the ribonuclease III family. In terms of assembly, homodimer. Mg(2+) is required as a cofactor.

Its subcellular location is the cytoplasm. The catalysed reaction is Endonucleolytic cleavage to 5'-phosphomonoester.. Functionally, digests double-stranded RNA. Involved in the processing of primary rRNA transcript to yield the immediate precursors to the large and small rRNAs (23S and 16S). Processes some mRNAs, and tRNAs when they are encoded in the rRNA operon. Processes pre-crRNA and tracrRNA of type II CRISPR loci if present in the organism. The chain is Ribonuclease 3 from Anoxybacillus flavithermus (strain DSM 21510 / WK1).